Reading from the N-terminus, the 274-residue chain is 2,3,4,5-tetrahydropyridine-2,6-dicarboxylate N-succinyltransferase (274 aa).

2 residues coordinate substrate: Arg-104 and Asp-141.

Belongs to the transferase hexapeptide repeat family. As to quaternary structure, homotrimer.

Its subcellular location is the cytoplasm. It catalyses the reaction (S)-2,3,4,5-tetrahydrodipicolinate + succinyl-CoA + H2O = (S)-2-succinylamino-6-oxoheptanedioate + CoA. It participates in amino-acid biosynthesis; L-lysine biosynthesis via DAP pathway; LL-2,6-diaminopimelate from (S)-tetrahydrodipicolinate (succinylase route): step 1/3. The chain is 2,3,4,5-tetrahydropyridine-2,6-dicarboxylate N-succinyltransferase from Shewanella sediminis (strain HAW-EB3).